Consider the following 781-residue polypeptide: uncharacterized protein (781 aa).

A disordered region spans residues 1-34 (MNIAEEPSDEVISSGPEDTDICSQQTSASAEAGD). S29 carries the phosphoserine modification. RRM domains are found at residues 195 to 273 (GNIF…YHVE) and 295 to 418 (RCLF…KAVQ). The segment at 345 to 375 (SNTRSSSSVSFNEEGSVESNKSSNNTNGNAQ) is disordered. Low complexity predominate over residues 347–364 (TRSSSSVSFNEEGSVESN). Over residues 365-374 (KSSNNTNGNA) the composition is skewed to polar residues. Residues S433, S435, S482, and S485 each carry the phosphoserine modification. T486 carries the phosphothreonine modification. A Phosphoserine modification is found at S501. Positions 540-638 (SNLYVKHIPL…QVLSVSFAQK (99 aa)) constitute an RRM 3 domain. The disordered stretch occupies residues 640-668 (GNLSSSDDDDQSQTDNSSKFQNFQPHNDY).

In terms of assembly, interacts with RBG1.

This is an uncharacterized protein from Saccharomyces cerevisiae (strain ATCC 204508 / S288c) (Baker's yeast).